The primary structure comprises 146 residues: Thyroid hormone-inducible hepatic protein (146 aa).

A disordered region spans residues 83-104; that stretch reads KVAGSEENGTAETEEVEDESAS. The segment covering 94–104 has biased composition (acidic residues); sequence ETEEVEDESAS.

Belongs to the SPOT14 family. In terms of assembly, homodimer. Heterodimer with MID1IP1. Interacts with THRB and PLAGL1. In terms of tissue distribution, mainly expressed in tissues that synthesize triglycerides.

Its subcellular location is the nucleus. It localises to the cytoplasm. Its function is as follows. Plays a role in the regulation of lipogenesis, especially in lactating mammary gland. Important for the biosynthesis of triglycerides with medium-length fatty acid chains. May modulate lipogenesis by interacting with MID1IP1 and preventing its interaction with ACACA. May function as transcriptional coactivator. May modulate the transcription factor activity of THRB. The protein is Thyroid hormone-inducible hepatic protein (THRSP) of Homo sapiens (Human).